The following is a 484-amino-acid chain: Tyramine receptor 1 (484 aa).

Over 1–54 (MVRVELQAASLMNGSSAAEEPQDALVGGDACGGRRPPSVLGVRLAVPEWEVAVT) the chain is Extracellular. A glycan (N-linked (GlcNAc...) asparagine) is linked at asparagine 13. Residues 55-77 (AVSLSLIILITIVGNVLVVLSVF) traverse the membrane as a helical segment. Over 78–87 (TYKPLRIVQN) the chain is Cytoplasmic. The chain crosses the membrane as a helical span at residues 88-109 (FFIVSLAVADLTVAVLVMPFNV). The Extracellular segment spans residues 110 to 126 (AYSLIQRWVFGIVVCKM). Cysteine 124 and cysteine 203 are disulfide-bonded. A helical membrane pass occupies residues 127 to 147 (WLTCDVLCCTASILNLCAIAL). Residues 148–167 (DRYWAITDPINYAQKRTLRR) lie on the Cytoplasmic side of the membrane. A helical transmembrane segment spans residues 168–190 (VLAMIAGVWLLSGVISSPPLIGW). At 191–215 (NDWPMEFNDTTPCQLTEEQGYVIYS) the chain is on the extracellular side. N-linked (GlcNAc...) asparagine glycosylation is present at asparagine 198. The helical transmembrane segment at 216–237 (SLGSFFIPLFIMTIVYVEIFIA) threads the bilayer. The Cytoplasmic portion of the chain corresponds to 238–411 (TKRRLRERAK…LSKERRAART (174 aa)). Over residues 253–280 (SAMKQQMAAQAVPSSVPSHDQESVSSET) the composition is skewed to polar residues. 2 disordered regions span residues 253 to 322 (SAMK…PAMV) and 358 to 383 (TTTAVTDSPRSRTASQKGSTAPPTPV). Over residues 295–306 (EKRRKTKKKSKK) the composition is skewed to basic residues. Positions 361–378 (AVTDSPRSRTASQKGSTA) are enriched in polar residues. Residues 412-433 (LGIIMGVFVVCWLPFFLMYVIV) traverse the membrane as a helical segment. The Extracellular segment spans residues 434–448 (PFCNPSCKPSPKLVN). Residues 449–470 (FITWLGYINSALNPIIYTIFNL) traverse the membrane as a helical segment. At 471-484 (DFRRAFKKLLHFKT) the chain is on the cytoplasmic side.

Belongs to the G-protein coupled receptor 1 family. Present mainly in the central nervous system, especially in the supra- and subesophageal, thoracic and abdominal ganglia. Not found in the distal part of optic lobes.

Its subcellular location is the cell membrane. G-protein coupled receptor for tyramine, a known neurotransmitter and neuromodulator and direct precursor of octopamine. The rank order of potency for agonists of this receptor is tyramine &gt; naphazoline &gt; tolazoline &gt; DL-octopamine &gt; dopamine &gt; epinephrine &gt; 5-hydroxytryptamine. For antagonists, the rank order is yohimbine &gt; chlorpromazine &gt; mianserin &gt; phentolamine &gt; metoclopramide. The chain is Tyramine receptor 1 (GCR1) from Locusta migratoria (Migratory locust).